The chain runs to 177 residues: Large ribosomal subunit protein uL6 (177 aa).

It belongs to the universal ribosomal protein uL6 family. As to quaternary structure, part of the 50S ribosomal subunit.

Its function is as follows. This protein binds to the 23S rRNA, and is important in its secondary structure. It is located near the subunit interface in the base of the L7/L12 stalk, and near the tRNA binding site of the peptidyltransferase center. The polypeptide is Large ribosomal subunit protein uL6 (Pseudomonas paraeruginosa (strain DSM 24068 / PA7) (Pseudomonas aeruginosa (strain PA7))).